The primary structure comprises 1121 residues: uncharacterized protein (1121 aa).

The disordered stretch occupies residues 179-198; sequence GPGECQSVHNQSSGSGSNSY. N-linked (GlcNAc...) asparagine; by host glycosylation is found at asparagine 188, asparagine 325, asparagine 351, asparagine 449, asparagine 561, and asparagine 615. Disordered regions lie at residues 649–684 and 701–734; these read KRIH…RIHN and STRQ…TDSD. The span at 701–715 shows a compositional bias: polar residues; the sequence is STRQDASGGSSSGTK. N-linked (GlcNAc...) asparagine; by host glycosylation is found at asparagine 838, asparagine 911, asparagine 914, and asparagine 980.

The protein belongs to the herpesviridae US22 family.

This is an uncharacterized protein from Homo sapiens (Human).